The chain runs to 376 residues: Glutamate 5-kinase (376 aa).

Lysine 18 contacts ATP. Substrate is bound by residues serine 58, aspartate 145, and asparagine 157. Residues 177-178 (SD) and 218-224 (TGGMASK) each bind ATP. Residues 280-358 (TGALTLDAGA…SELPGELRRP (79 aa)) enclose the PUA domain.

The protein belongs to the glutamate 5-kinase family.

It is found in the cytoplasm. The enzyme catalyses L-glutamate + ATP = L-glutamyl 5-phosphate + ADP. Its pathway is amino-acid biosynthesis; L-proline biosynthesis; L-glutamate 5-semialdehyde from L-glutamate: step 1/2. Catalyzes the transfer of a phosphate group to glutamate to form L-glutamate 5-phosphate. This chain is Glutamate 5-kinase, found in Mycobacterium tuberculosis (strain ATCC 25177 / H37Ra).